The chain runs to 142 residues: Hemoglobin subunit alpha (142 aa).

Ser-1 carries the N-acetylserine modification. The 142-residue stretch at 1–142 (SLSEKNKAAV…VALALADRYR (142 aa)) folds into the Globin domain. His-59 is an O2 binding site. His-88 contacts heme b.

This sequence belongs to the globin family. In terms of assembly, heterotetramer of two alpha chains and two beta chains. As to expression, red blood cells.

In terms of biological role, involved in oxygen transport from gills to the various peripheral tissues. This Pagothenia borchgrevinki (Bald rockcod) protein is Hemoglobin subunit alpha (hba).